Here is a 190-residue protein sequence, read N- to C-terminus: Putative manganese efflux pump MntP (190 aa).

6 helical membrane passes run 3–23 (PISL…AALG), 41–61 (LIFG…GQVA), 69–89 (DHWI…YNGL), 105–125 (FWIL…VGVG), 133–153 (IMVA…IGVM), and 168–188 (IVGG…HLTA).

It belongs to the MntP (TC 9.B.29) family.

Its subcellular location is the cell inner membrane. In terms of biological role, probably functions as a manganese efflux pump. This is Putative manganese efflux pump MntP from Pseudomonas syringae pv. tomato (strain ATCC BAA-871 / DC3000).